We begin with the raw amino-acid sequence, 477 residues long: Homospermidine synthase (477 aa).

This sequence belongs to the saccharopine dehydrogenase family. In terms of assembly, homodimer. NAD(+) serves as cofactor.

The enzyme catalyses 2 putrescine = sym-homospermidine + NH4(+). The catalysed reaction is putrescine + spermidine = sym-homospermidine + propane-1,3-diamine. Involved in the NAD(+)-dependent synthesis of the polyamine homospermidine from putrescine. The polypeptide is Homospermidine synthase (hss) (Blastochloris viridis (Rhodopseudomonas viridis)).